A 400-amino-acid polypeptide reads, in one-letter code: Gap junction alpha-8 protein (400 aa).

An intramembrane segment occupies 2–12 (GDWSFLGNILE). The Cytoplasmic segment spans residues 13 to 21 (QVNEQSTVI). Residues 22–42 (GRVWLTVLFIFRILILGTAAE) form a helical membrane-spanning segment. At 43 to 71 (LVWGDEQSDFVCNTQQPGCENVCYDEAFP) the chain is on the extracellular side. 3 cysteine pairs are disulfide-bonded: cysteine 54/cysteine 196, cysteine 61/cysteine 190, and cysteine 65/cysteine 185. A helical membrane pass occupies residues 72–92 (ISHIRLWVLQIIFVSTPSLVY). The Cytoplasmic portion of the chain corresponds to 93-156 (FGHAVHHVRM…GTLLRTYILH (64 aa)). Residues 104 to 118 (EKRKEREEAERRQQA) are compositionally biased toward basic and acidic residues. Residues 104-139 (EKRKEREEAERRQQAEVDEEKLPLAPNQNKGNNPDG) are disordered. The span at 129–138 (PNQNKGNNPD) shows a compositional bias: polar residues. The chain crosses the membrane as a helical span at residues 157–177 (IIFKTLFEVGFIVGQYFLYGF). Topologically, residues 178–205 (RILPLYRCGRWPCPNLVDCFVSRPTEKT) are extracellular. The chain crosses the membrane as a helical span at residues 206–226 (IFIMFMLVVAAVSLFLNLVEI). The Cytoplasmic portion of the chain corresponds to 227–400 (SHLILKRIRR…SRARSDDLTV (174 aa)). A disordered region spans residues 323–400 (YAQAKEPEEE…SRARSDDLTV (78 aa)). Residues 327–336 (KEPEEEKVKA) show a composition bias toward basic and acidic residues. Acidic residues predominate over residues 337-346 (EEEEEQEEEQ). Position 364 is a phosphoserine; by CK2 (serine 364). Positions 381 to 392 (RSLSRLSKASSR) are enriched in low complexity.

It belongs to the connexin family. Alpha-type (group II) subfamily. A hemichannel or connexon is composed of a hexamer of connexins. A functional gap junction is formed by the apposition of two hemichannels. Forms heteromeric channels with GJA3. During early stages of lens development, interacts with the C-terminus of MIP. Post-translationally, proteolytically cleaved by caspase-3 during lens development. Phosphorylated on Ser-364; which inhibits cleavage by caspase-3.

The protein localises to the cell membrane. The protein resides in the cell junction. It is found in the gap junction. In terms of biological role, structural component of eye lens gap junctions. Gap junctions are dodecameric channels that connect the cytoplasm of adjoining cells. They are formed by the docking of two hexameric hemichannels, one from each cell membrane. Small molecules and ions diffuse from one cell to a neighboring cell via the central pore. The polypeptide is Gap junction alpha-8 protein (GJA8) (Gallus gallus (Chicken)).